Here is a 243-residue protein sequence, read N- to C-terminus: MSDWLFDLGNSRFKFAPLQGDRAGDVQAWAHGAEGMAGQPPHSLPSGTTAFVASVAAPSLTSAMLDQLQRRFEHVHVVRTSAECAGVRIAYAKPEKFGVDRFLALLAAAKAQRPVLVVGVGTALTIDLLDADGQHHGGRISASPTTMREALHARAVQLPATGGDYSEFANDTADALASGCDGAAVALIERSAQQAHTLLGVAPSLLVHGGGAPALMPLLPGADYHPSLVLDGLARWAVHQPAG.

ATP is bound at residue 7-14; that stretch reads DLGNSRFK. Substrate contacts are provided by residues tyrosine 91 and 98 to 101; that span reads GVDR. The active-site Proton acceptor is aspartate 100. Position 122 (threonine 122) interacts with ATP. Threonine 172 is a binding site for substrate.

The protein belongs to the type III pantothenate kinase family. As to quaternary structure, homodimer. The cofactor is NH4(+). K(+) is required as a cofactor.

It localises to the cytoplasm. The catalysed reaction is (R)-pantothenate + ATP = (R)-4'-phosphopantothenate + ADP + H(+). It functions in the pathway cofactor biosynthesis; coenzyme A biosynthesis; CoA from (R)-pantothenate: step 1/5. Catalyzes the phosphorylation of pantothenate (Pan), the first step in CoA biosynthesis. The sequence is that of Type III pantothenate kinase from Stenotrophomonas maltophilia (strain K279a).